The sequence spans 290 residues: 4-hydroxy-tetrahydrodipicolinate synthase (290 aa).

Residue threonine 48 coordinates pyruvate. Catalysis depends on tyrosine 137, which acts as the Proton donor/acceptor. The active-site Schiff-base intermediate with substrate is lysine 165. Position 206 (isoleucine 206) interacts with pyruvate.

The protein belongs to the DapA family. Homotetramer; dimer of dimers.

It localises to the cytoplasm. The catalysed reaction is L-aspartate 4-semialdehyde + pyruvate = (2S,4S)-4-hydroxy-2,3,4,5-tetrahydrodipicolinate + H2O + H(+). The protein operates within amino-acid biosynthesis; L-lysine biosynthesis via DAP pathway; (S)-tetrahydrodipicolinate from L-aspartate: step 3/4. Functionally, catalyzes the condensation of (S)-aspartate-beta-semialdehyde [(S)-ASA] and pyruvate to 4-hydroxy-tetrahydrodipicolinate (HTPA). The polypeptide is 4-hydroxy-tetrahydrodipicolinate synthase (Enterococcus faecalis (strain ATCC 700802 / V583)).